The following is a 362-amino-acid chain: Terpene synthase 3 (362 aa).

A DDxx(x)D/E motif motif is present at residues 90 to 95; that stretch reads DDFLER. The NDxxSxxxD/E motif signature appears at 239-247; that stretch reads NDCVSYAKE.

The protein belongs to the terpene synthase family.

The catalysed reaction is (2E,6E)-farnesyl diphosphate = beta-maaliene + diphosphate. The enzyme catalyses (2E,6E)-farnesyl diphosphate = aristolene + diphosphate. It carries out the reaction (2E,6E)-farnesyl diphosphate = calarene + diphosphate. It catalyses the reaction (2E)-geranyl diphosphate = (E)-beta-ocimene + diphosphate. The catalysed reaction is (2E)-geranyl diphosphate = (Z)-beta-ocimene + diphosphate. The enzyme catalyses (2E)-geranyl diphosphate + H2O = linalool + diphosphate. It carries out the reaction (2E)-geranyl diphosphate = beta-myrcene + diphosphate. Functionally, terpene synthase that converts its substrate farnesyl diphosphate (FPP) into an unidentified sesquiterpene as a major product, as well as beta-maaliene, aristolene, calarene and 2 additional unidentified sesquiterpene as minor products. Is also able to convert geranyl diphosphate (GPP) into a mixture of monoterpenes including (Z)-beta-ocimene, (E)-beta-ocimene, allo-ocimene, linalool and beta-myrcene. In Dictyostelium discoideum (Social amoeba), this protein is Terpene synthase 3.